The sequence spans 295 residues: Alpha-1A adrenergic receptor (295 aa).

Topologically, residues M1 to I27 are extracellular. N-linked (GlcNAc...) asparagine glycosylation is found at N7, N13, and N22. The chain crosses the membrane as a helical span at residues L28–V51. Topologically, residues A52–Y64 are cytoplasmic. The chain crosses the membrane as a helical span at residues I65–I88. The Extracellular portion of the chain corresponds to L89 to C99. C99 and C176 form a disulfide bridge. A helical transmembrane segment spans residues N100–I122. Residues D123–G143 are Cytoplasmic-facing. A helical transmembrane segment spans residues L144–Q167. The Extracellular segment spans residues P168–E181. Residues P182–C205 form a helical membrane-spanning segment. Topologically, residues R206–T273 are cytoplasmic. S215 is modified (phosphoserine; by PKA). A helical transmembrane segment spans residues L274–G295.

It belongs to the G-protein coupled receptor 1 family. Adrenergic receptor subfamily. ADRA1A sub-subfamily. In terms of assembly, homo- and heterooligomer. Heterooligomerizes with ADRA1B homooligomers in cardiac myocytes. Interacts with CAVIN4.

It localises to the nucleus membrane. It is found in the cell membrane. Its subcellular location is the cytoplasm. The protein localises to the membrane. The protein resides in the caveola. Its function is as follows. This alpha-adrenergic receptor mediates its action by association with G proteins that activate a phosphatidylinositol-calcium second messenger system. Its effect is mediated by G(q) and G(11) proteins. Nuclear ADRA1A-ADRA1B heterooligomers regulate phenylephrine (PE)-stimulated ERK signaling in cardiac myocytes. The sequence is that of Alpha-1A adrenergic receptor (ADRA1A) from Canis lupus familiaris (Dog).